The primary structure comprises 531 residues: MALKAILFLGLFLVVIVSPITVYGGAVCPASSTFGRGSFPDGFLFGATTSAFQHEGAAEEGGRGSSIWDSFTLKQHSESNNNLDGRLGVDFYHHYKEDVQLLKKLNMDAFRFSISWSRIFPHGKKDKGVSETGVKFYNDLINELIANGVTPLVTLFQWDVPQALEDEYGGFLSDRILEDFRDFAQFAFNKYGDRVKHWVTINEPYEFSRGGYETGEKAPGRCSKYVNEKCVAGKSGHEVYTVSHNLLLAHAEAVEEFRKCGKCTGGKIGIVQSPMWFEPYDKKSTSSPSEEIVKRAMDFTLGWHMEPITHGDYPQAMKDVVGSRLPSFTPEQKEKLKGSYDFVGINYFTSTFVAHTDNVNPEKPSWEADSRLQLHSNNVDGFKIGSQPATAKYPVCADGLRKVLKYIKENYNDPEIIVTGNGYKETLEEKDVLPDALSDSNRKYYHMRHLMALHGAVCEDKVNVKGYFVSSLMDGLEWEDGYKTRSGLYYVDYGHNMGRHEKQSAKWLSKLLEKVPDTIQSKVDSDSRKEL.

Positions 1–24 (MALKAILFLGLFLVVIVSPITVYG) are cleaved as a signal peptide. A beta-D-glucoside is bound by residues Q53 and 202–203 (NE). E203 (proton donor) is an active-site residue. A disulfide bond links C222 and C230. A beta-D-glucoside-binding positions include F348 and 477 to 478 (EW).

It belongs to the glycosyl hydrolase 1 family.

The chain is Probable inactive beta-glucosidase 25 from Arabidopsis thaliana (Mouse-ear cress).